The following is a 177-amino-acid chain: ATP synthase subunit delta (177 aa).

Belongs to the ATPase delta chain family. In terms of assembly, F-type ATPases have 2 components, F(1) - the catalytic core - and F(0) - the membrane proton channel. F(1) has five subunits: alpha(3), beta(3), gamma(1), delta(1), epsilon(1). F(0) has three main subunits: a(1), b(2) and c(10-14). The alpha and beta chains form an alternating ring which encloses part of the gamma chain. F(1) is attached to F(0) by a central stalk formed by the gamma and epsilon chains, while a peripheral stalk is formed by the delta and b chains.

The protein resides in the cell inner membrane. Its function is as follows. F(1)F(0) ATP synthase produces ATP from ADP in the presence of a proton or sodium gradient. F-type ATPases consist of two structural domains, F(1) containing the extramembraneous catalytic core and F(0) containing the membrane proton channel, linked together by a central stalk and a peripheral stalk. During catalysis, ATP synthesis in the catalytic domain of F(1) is coupled via a rotary mechanism of the central stalk subunits to proton translocation. In terms of biological role, this protein is part of the stalk that links CF(0) to CF(1). It either transmits conformational changes from CF(0) to CF(1) or is implicated in proton conduction. The sequence is that of ATP synthase subunit delta from Shewanella sp. (strain ANA-3).